Consider the following 293-residue polypeptide: Bifunctional protein FolD (293 aa).

NADP(+) contacts are provided by residues 165-167 (GRS), Ser190, and Ile231.

This sequence belongs to the tetrahydrofolate dehydrogenase/cyclohydrolase family. In terms of assembly, homodimer.

The catalysed reaction is (6R)-5,10-methylene-5,6,7,8-tetrahydrofolate + NADP(+) = (6R)-5,10-methenyltetrahydrofolate + NADPH. It catalyses the reaction (6R)-5,10-methenyltetrahydrofolate + H2O = (6R)-10-formyltetrahydrofolate + H(+). It functions in the pathway one-carbon metabolism; tetrahydrofolate interconversion. In terms of biological role, catalyzes the oxidation of 5,10-methylenetetrahydrofolate to 5,10-methenyltetrahydrofolate and then the hydrolysis of 5,10-methenyltetrahydrofolate to 10-formyltetrahydrofolate. The sequence is that of Bifunctional protein FolD from Synechococcus sp. (strain CC9902).